Consider the following 122-residue polypeptide: Large ribosomal subunit protein uL14 (122 aa).

It belongs to the universal ribosomal protein uL14 family. In terms of assembly, part of the 50S ribosomal subunit. Forms a cluster with proteins L3 and L19. In the 70S ribosome, L14 and L19 interact and together make contacts with the 16S rRNA in bridges B5 and B8.

Its function is as follows. Binds to 23S rRNA. Forms part of two intersubunit bridges in the 70S ribosome. The polypeptide is Large ribosomal subunit protein uL14 (Campylobacter jejuni subsp. jejuni serotype O:6 (strain 81116 / NCTC 11828)).